Reading from the N-terminus, the 632-residue chain is Signal-transduction and transcriptional-control protein (632 aa).

Residues 197–270 (TYQYLNKITD…GQSYEDEEIM (74 aa)) enclose the PAS domain. In terms of domain architecture, Sigma-54 factor interaction spans 324-554 (IIGQSEAMKR…LENCIENIVN (231 aa)). Residues 352–359 (GESGTGKE) and 416–425 (ANEGTLFLDE) each bind ATP. The segment at residues 606–625 (ISKACRILGINRSTLYIKIK) is a DNA-binding region (H-T-H motif).

The protein is Signal-transduction and transcriptional-control protein (stc) of Clostridium beijerinckii (Clostridium MP).